The sequence spans 423 residues: Protein IQ-DOMAIN 16 (423 aa).

2 consecutive IQ domains span residues 99–127 (RHWA…GIVK) and 128–150 (LQAL…CIKA). Positions 231–251 (QKKLEIAIKREKAQALALSNQ) form a coiled coil. Positions 235 to 252 (EIAIKREKAQALALSNQI) are calmodulin-binding.

This sequence belongs to the IQD family. As to quaternary structure, binds to multiple calmodulin (CaM) in the presence of Ca(2+) and CaM-like proteins.

It localises to the cytoplasm. Its subcellular location is the cytoskeleton. The protein localises to the cell membrane. Functionally, may be involved in cooperative interactions with calmodulins or calmodulin-like proteins. Recruits calmodulin proteins to microtubules, thus being a potential scaffold in cellular signaling and trafficking. Regulates cell shape and elongation in aerial organs (i.e. cotyledons, leaves, and hypocotyls) probably by regulating cortical microtubules (MT) arrays orientation. May associate with nucleic acids and regulate gene expression at the transcriptional or post-transcriptional level. In Arabidopsis thaliana (Mouse-ear cress), this protein is Protein IQ-DOMAIN 16.